Reading from the N-terminus, the 393-residue chain is NAD(P)H-quinone oxidoreductase subunit H, chloroplastic (393 aa).

It belongs to the complex I 49 kDa subunit family. NDH is composed of at least 16 different subunits, 5 of which are encoded in the nucleus.

The protein resides in the plastid. The protein localises to the chloroplast thylakoid membrane. It catalyses the reaction a plastoquinone + NADH + (n+1) H(+)(in) = a plastoquinol + NAD(+) + n H(+)(out). It carries out the reaction a plastoquinone + NADPH + (n+1) H(+)(in) = a plastoquinol + NADP(+) + n H(+)(out). In terms of biological role, NDH shuttles electrons from NAD(P)H:plastoquinone, via FMN and iron-sulfur (Fe-S) centers, to quinones in the photosynthetic chain and possibly in a chloroplast respiratory chain. The immediate electron acceptor for the enzyme in this species is believed to be plastoquinone. Couples the redox reaction to proton translocation, and thus conserves the redox energy in a proton gradient. This is NAD(P)H-quinone oxidoreductase subunit H, chloroplastic from Lotus japonicus (Lotus corniculatus var. japonicus).